Here is a 234-residue protein sequence, read N- to C-terminus: Leucyl/phenylalanyl-tRNA--protein transferase (234 aa).

It belongs to the L/F-transferase family.

Its subcellular location is the cytoplasm. It carries out the reaction N-terminal L-lysyl-[protein] + L-leucyl-tRNA(Leu) = N-terminal L-leucyl-L-lysyl-[protein] + tRNA(Leu) + H(+). The enzyme catalyses N-terminal L-arginyl-[protein] + L-leucyl-tRNA(Leu) = N-terminal L-leucyl-L-arginyl-[protein] + tRNA(Leu) + H(+). The catalysed reaction is L-phenylalanyl-tRNA(Phe) + an N-terminal L-alpha-aminoacyl-[protein] = an N-terminal L-phenylalanyl-L-alpha-aminoacyl-[protein] + tRNA(Phe). In terms of biological role, functions in the N-end rule pathway of protein degradation where it conjugates Leu, Phe and, less efficiently, Met from aminoacyl-tRNAs to the N-termini of proteins containing an N-terminal arginine or lysine. The sequence is that of Leucyl/phenylalanyl-tRNA--protein transferase from Citrobacter koseri (strain ATCC BAA-895 / CDC 4225-83 / SGSC4696).